The following is a 577-amino-acid chain: Isocitrate dehydrogenase kinase/phosphatase (577 aa).

Residues 318–324 (APGVRGM) and Lys339 each bind ATP. Asp374 is a catalytic residue.

Belongs to the AceK family.

Its subcellular location is the cytoplasm. The enzyme catalyses L-seryl-[isocitrate dehydrogenase] + ATP = O-phospho-L-seryl-[isocitrate dehydrogenase] + ADP + H(+). Bifunctional enzyme which can phosphorylate or dephosphorylate isocitrate dehydrogenase (IDH) on a specific serine residue. This is a regulatory mechanism which enables bacteria to bypass the Krebs cycle via the glyoxylate shunt in response to the source of carbon. When bacteria are grown on glucose, IDH is fully active and unphosphorylated, but when grown on acetate or ethanol, the activity of IDH declines drastically concomitant with its phosphorylation. The sequence is that of Isocitrate dehydrogenase kinase/phosphatase from Pseudomonas aeruginosa (strain LESB58).